Reading from the N-terminus, the 413-residue chain is Chemotactic signal transduction system substrate-binding protein BasB (413 aa).

Positions 1–31 (MHSTTRREWLGAIGATAATGLAGCAGVGGAG) are cleaved as a signal peptide.

It is found in the cell membrane. In terms of biological role, mediates chemotaxis towards five attractant amino acids (leucine, isoleucine, valine, methionine and cysteine). May function as a receptor that binds the amino acids and transduces a signal to BasT. Has probably no additional role in transport. The sequence is that of Chemotactic signal transduction system substrate-binding protein BasB (basB) from Halobacterium salinarum (strain ATCC 29341 / DSM 671 / R1).